The sequence spans 110 residues: Large ribosomal subunit protein uL22 (110 aa).

The protein belongs to the universal ribosomal protein uL22 family. As to quaternary structure, part of the 50S ribosomal subunit.

This protein binds specifically to 23S rRNA; its binding is stimulated by other ribosomal proteins, e.g. L4, L17, and L20. It is important during the early stages of 50S assembly. It makes multiple contacts with different domains of the 23S rRNA in the assembled 50S subunit and ribosome. Its function is as follows. The globular domain of the protein is located near the polypeptide exit tunnel on the outside of the subunit, while an extended beta-hairpin is found that lines the wall of the exit tunnel in the center of the 70S ribosome. This Idiomarina loihiensis (strain ATCC BAA-735 / DSM 15497 / L2-TR) protein is Large ribosomal subunit protein uL22.